The primary structure comprises 119 residues: MICOS complex subunit MIC13 (119 aa).

Residues 1–7 (MVARVWS) lie on the Mitochondrial matrix side of the membrane. The chain crosses the membrane as a helical span at residues 8 to 26 (LMRFLIKGSVAGGAVYLVY). The Mitochondrial intermembrane segment spans residues 27 to 119 (DQELLGPSDK…GWEYLKEHSK (93 aa)).

Belongs to the MICOS complex subunit Mic13 family. Component of the mitochondrial contact site and cristae organizing system (MICOS) complex, composed of at least MICOS10/MIC10, CHCHD3/MIC19, CHCHD6/MIC25, APOO/MIC26, MICOS13/MIC13, APOOL/MIC27 and IMMT/MIC60. The MICOS complex associates with mitochondrial outer membrane proteins SAMM50, MTX1 and MTX2 (together described as components of the mitochondrial outer membrane sorting assembly machinery (SAM) complex) and DNAJC11, mitochondrial inner membrane protein TMEM11 and with HSPA9. The MICOS and SAM complexes together with DNAJC11 are part of a large protein complex spanning both membranes termed the mitochondrial intermembrane space bridging (MIB) complex.

The protein resides in the mitochondrion inner membrane. Its function is as follows. Component of the MICOS complex, a large protein complex of the mitochondrial inner membrane that plays crucial roles in the maintenance of crista junctions, inner membrane architecture, and formation of contact sites to the outer membrane. Constituent of mature MICOS complex, it is required for the formation of cristae junction (CJ) and maintenance of cristae morphology. Required for the incorporation of MICOS10/MIC10 into the MICOS complex. The protein is MICOS complex subunit MIC13 (Micos13) of Mus musculus (Mouse).